The chain runs to 262 residues: Transcription factor Adf-1 (262 aa).

The MADF DNA-binding region spans N24–R104. One can recognise a BESS domain in the interval S217 to L256.

Post-translationally, O-glycosylated; contains N-acetylglucosamine side chains.

Its subcellular location is the nucleus. In terms of biological role, may play an important role not only in the regulation of Adh expression but also in the transcription of other genes. In Drosophila melanogaster (Fruit fly), this protein is Transcription factor Adf-1 (Adf1).